Reading from the N-terminus, the 522-residue chain is Protein nucleotidyltransferase YdiU (522 aa).

Positions 109, 111, 112, 132, 144, 145, 195, and 202 each coordinate ATP. Aspartate 271 (proton acceptor) is an active-site residue. Residues asparagine 272 and aspartate 281 each contribute to the Mg(2+) site. Aspartate 281 serves as a coordination point for ATP.

It belongs to the SELO family. Mg(2+) serves as cofactor. The cofactor is Mn(2+).

The enzyme catalyses L-seryl-[protein] + ATP = 3-O-(5'-adenylyl)-L-seryl-[protein] + diphosphate. It carries out the reaction L-threonyl-[protein] + ATP = 3-O-(5'-adenylyl)-L-threonyl-[protein] + diphosphate. It catalyses the reaction L-tyrosyl-[protein] + ATP = O-(5'-adenylyl)-L-tyrosyl-[protein] + diphosphate. The catalysed reaction is L-histidyl-[protein] + UTP = N(tele)-(5'-uridylyl)-L-histidyl-[protein] + diphosphate. The enzyme catalyses L-seryl-[protein] + UTP = O-(5'-uridylyl)-L-seryl-[protein] + diphosphate. It carries out the reaction L-tyrosyl-[protein] + UTP = O-(5'-uridylyl)-L-tyrosyl-[protein] + diphosphate. Functionally, nucleotidyltransferase involved in the post-translational modification of proteins. It can catalyze the addition of adenosine monophosphate (AMP) or uridine monophosphate (UMP) to a protein, resulting in modifications known as AMPylation and UMPylation. In Burkholderia ambifaria (strain ATCC BAA-244 / DSM 16087 / CCUG 44356 / LMG 19182 / AMMD) (Burkholderia cepacia (strain AMMD)), this protein is Protein nucleotidyltransferase YdiU.